Reading from the N-terminus, the 171-residue chain is Mitochondrial import inner membrane translocase subunit Tim17-A (171 aa).

Residues cysteine 9 and cysteine 78 are joined by a disulfide bond. 3 helical membrane-spanning segments follow: residues 17 to 37 (CGGA…FKGF), 63 to 77 (GGSF…STID), and 113 to 133 (VGSA…GILL). The segment at 144 to 171 (GPQFTEDHSQLPSSQLPSSPFGDYRQYQ) is disordered. Residues 153 to 163 (QLPSSQLPSSP) are compositionally biased toward low complexity.

The protein belongs to the Tim17/Tim22/Tim23 family. Component of the TIM23 complex at least composed of TIMM23, TIMM17 (TIMM17A or TIMM17B) and TIMM50. The complex interacts with the TIMM44 component of the PAM complex and with DNAJC15. In terms of processing, degraded by YMEL1 downstream of the integrated stress response (ISR).

It localises to the mitochondrion inner membrane. In terms of biological role, essential component of the TIM23 complex, a complex that mediates the translocation of transit peptide-containing proteins across the mitochondrial inner membrane. The protein is Mitochondrial import inner membrane translocase subunit Tim17-A (Timm17a) of Mus musculus (Mouse).